Consider the following 526-residue polypeptide: Acid-sensing ion channel 1 (526 aa).

Over 1 to 49 (MELKTEEEEVGGVQPVSIQAFASSSTLHGLAHIFSYERLSLKRALWALC) the chain is Cytoplasmic. A helical transmembrane segment spans residues 50–66 (FLGSLAVLLCVCTERVQ). Residues 67–425 (YYFCYHHVTK…ETIEQKKAYE (359 aa)) lie on the Extracellular side of the membrane. Cystine bridges form between Cys93/Cys194, Cys172/Cys179, Cys290/Cys365, Cys308/Cys361, Cys312/Cys359, Cys321/Cys343, and Cys323/Cys335. Residues Asn366 and Asn393 are each glycosylated (N-linked (GlcNAc...) asparagine). A discontinuously helical transmembrane segment spans residues 426-456 (IAGLLGDIGGQMGLFIGASILTVLELFDYAY). The GAS motif; ion selectivity filter motif lies at 442 to 444 (GAS). The Cytoplasmic portion of the chain corresponds to 457 to 526 (EVIKHRLCRR…ARGTFEDFTC (70 aa)). A phosphoserine mark is found at Ser477 and Ser497.

This sequence belongs to the amiloride-sensitive sodium channel (TC 1.A.6) family. ASIC1 subfamily. In terms of assembly, homotrimer. Heterotrimer; with other ASIC proteins producing channel with different properties. Interacts with PICK1; regulates ASIC1 clustering in membranes. Interacts with STOM; alters heterotrimeric ASIC channels activity. Post-translationally, pH-gating could be regulated by serine proteases. Phosphorylation by PKA regulates interaction with PICK1 and subcellular localization. Phosphorylation by PKC may regulate the channel. Expressed in dorsal root ganglia and sciatic nerve (at protein level). Widely distributed throughout the brain. Expressed in olfactory bulb, neo and allocortical regions, dentate granule cells, pyramidal cells of CA1-CA3 subfields of the hippocampal formation, habenula, basolateral amygdaloid nuclei, and in the Purkinje and granule cells of the cerebellum. Diffusely detected over most other regions of the basal ganglia, including thalamic nuclei, substantia nigra, striatum and globus pallidus, hypothalamus, midbrain, pons, medulla and choroid plexus. As to expression, expressed only in dorsal root ganglion (DRG). In terms of tissue distribution, expressed exclusively in trigeminal ganglion and dorsal root ganglion.

It is found in the cell membrane. The protein resides in the postsynaptic cell membrane. Its subcellular location is the cell projection. The protein localises to the dendrite. The enzyme catalyses Na(+)(in) = Na(+)(out). It catalyses the reaction Li(+)(in) = Li(+)(out). The catalysed reaction is K(+)(in) = K(+)(out). It carries out the reaction Ca(2+)(in) = Ca(2+)(out). The enzyme catalyses H(+)(in) = H(+)(out). Inhibited by the diuretic drug amiloride. External calcium is required to potentiate proton activation of ASIC1 at physiological concentrations, but at higher, non-physiological concentrations, it inhibits activation. Also potentiated by other multivalent cations like Mg(2+), Ba(2+). Activated by FMRFamide-related neuropeptides. Inhibited by anti-inflammatory drugs like salicylic acid. The spider venom psalmotoxin-1 specifically inhibits the ASIC1 homotrimer. The snake venom mambalgin-1, mambalgin-2 and mambalgin-3 inhibit the homotrimer of Asic1a (ASIC1 isoform 1). The snake venom mambalgin-1 and mambalgin-2 inhibit heterotrimers of Asic1a-Asic1b (ASIC1 isoform 1-ASIC1 isoform 3). Heterotrimer of Asic1a-Asic2a is inhibited by the snake venom mambalgin-1, mambalgin-2 and mambalgin-3. Heterotrimer of Asic1a-Asic2b is inhibited by the snake venom mambalgin-1 and mambalgin-2. The spider venom Pi-theraphotoxin-Hm3a inhibits the homotrimer of Asic1a (ASIC1 isoform 1). The spider venom Pi-theraphotoxin-Hm3a inhibits heterotrimers of Asic1a-Asic1b (ASIC1 isoform 1-ASIC1 isoform 3). The spider venom Pi-hexatoxin-Hi1a inhibits the ASIC1 homotrimer. Its activity is regulated as follows. Not inhibited by extracellular calcium. In terms of biological role, forms voltage-independent, pH-gated trimeric sodium channels that act as postsynaptic excitatory receptors in the nervous system, playing a crucial role in regulating synaptic plasticity, learning, and memory. Upon extracellular pH drop this channel elicits transient, fast activating, and completely desensitizing inward currents. Displays high selectivity for sodium ions but can also permit the permeation of other cations. Regulates more or less directly intracellular calcium concentration and CaMKII phosphorylation, and thereby the density of dendritic spines. Modulates neuronal activity in the circuits underlying innate fear. Permeable to other cations including calcium, lithium and potassium. Its function is as follows. pH activation and steady-state inactivation are shifted to more acidic values. Forms channels that are not permeable to calcium as it discrimates stronger between monovalent cations. Functionally, has no pH-gated sodium channel activity per se but can associate with other ASICs and regulate their pH-sensitivity. The polypeptide is Acid-sensing ion channel 1 (Rattus norvegicus (Rat)).